Here is a 745-residue protein sequence, read N- to C-terminus: GELGQTDRFFVRIINTTVSEAAHTLTSEKEERIVTAVFGIVSEDMLDTPNTTFIDPLRLSPRLNKFRRNVIHLSPTLEQQLFVLASHLQSIGSSKALAVICSEESNDIGDAVRRTLAEFDVPLESVRTRMDGEALDGYLPAGGDVFVIGLSVADVEVIAKKLEKHSALRVIVLFSDVALLYDVFSVAFNGTTGCERLVFATNLPHWSDATPSSVTVQRFHTALSDPKMWTPLSLLAFATGRLMQSILPRMEKVGSDTLANFFYADSSVVVDGMRYGVFDDIECKPAGSDLEVCASNYGATQISVRSMSRTFNASIALLAEPMTPSMRFRDPNEGALTRAQLIGVVVGTIFAVLLLLALGIVLCVALRNTRDNDSAPKEFTDPVTLIFTDIESSTALWAAHPGMMADAVATHHRLIRSLIALYGAYEVKTVGDSFMIACRSAFAAVELARDLQLTLVHHDWGTVAIDESYRKFEEERAVEDSDYAPPTARLDSAVYCKLWNGLRVRAGIHTGLCDIAHDEVTKGYDYYGRTPNLAARTESAANGGQVLVTGATYYSLSVAERARLDATPIGPVPLRGVPEPVEMYQLNAVSGRTFAALRLDRKVDLINDESDATDGVYSECGSTHGELSHSAQTIMMVLCALIGTFTAPQREKLLIPFCERWRVSLPRKTGTAWDENYSREVVRCIALKVGHVINFDSSAYDFDDLPVSMRRQSSFIVLSHQLMESIQETTQQGPSGSDEVARTCV.

Residues 1–341 (GELGQTDRFF…NEGALTRAQL (341 aa)) lie on the Extracellular side of the membrane. N-linked (GlcNAc...) asparagine glycans are attached at residues asparagine 15, asparagine 50, asparagine 189, and asparagine 312. Residues 342-362 (IGVVVGTIFAVLLLLALGIVL) traverse the membrane as a helical segment. The Cytoplasmic portion of the chain corresponds to 363–745 (CVALRNTRDN…GSDEVARTCV (383 aa)). The Guanylate cyclase domain occupies 384–538 (TLIFTDIESS…RTPNLAARTE (155 aa)). Mg(2+)-binding residues include aspartate 389 and aspartate 432.

The protein belongs to the adenylyl cyclase class-3 family. The cofactor is Mg(2+).

It is found in the cell membrane. The enzyme catalyses ATP = 3',5'-cyclic AMP + diphosphate. Functionally, could act as a receptor for an unknown ligand. The sequence is that of Receptor-type adenylate cyclase from Trypanosoma congolense.